Reading from the N-terminus, the 443-residue chain is Histone deacetylase 10, chloroplastic (443 aa).

Residues 1–65 (MEQLWVPSLP…PSHNGTSISD (65 aa)) constitute a chloroplast transit peptide. The histone deacetylase stretch occupies residues 82 to 412 (DAHILYCTSP…FRAFLGEPSL (331 aa)). H222 (proton donor/acceptor) is an active-site residue. The Zn(2+) site is built by D259, H261, and D346.

It belongs to the histone deacetylase family. Zn(2+) is required as a cofactor. In terms of tissue distribution, expressed in leaves. Expressed in coleoptiles, leaves, flag leaves and flowers. Expressed at low levels in roots.

It localises to the plastid. Its subcellular location is the chloroplast. The protein localises to the mitochondrion. The catalysed reaction is N-acetylserotonin + H2O = serotonin + acetate. It carries out the reaction N-acetyltyramine + H2O = tyramine + acetate. It catalyses the reaction N-acetyltryptamine + H2O = tryptamine + acetate. The enzyme catalyses melatonin + H2O = 5-methoxytryptamine + acetate. Its activity is regulated as follows. The activity of this enzyme is not inhibited by butyrate, a well-known histone deacetylase inhibitor. Involved in the regulation of melatonin biosynthesis by catalyzing the deacetylation of N-acetylserotonin to produce serotonin. N-acetylserotonin is methylated by acetylserotonin O-methyltransferase (ASMT) to produce melatonin (N-acetyl-5-methoxytryptamine). Deacetylates melatonin to produce 5-methoxytryptamine. In vitro, deacetylates N-acetyltyramine and N-acetyltryptamine to produce tyramine and tryptamine, respectively. This is Histone deacetylase 10, chloroplastic from Oryza sativa subsp. japonica (Rice).